Reading from the N-terminus, the 251-residue chain is NADH-quinone oxidoreductase subunit B (251 aa).

The [4Fe-4S] cluster site is built by cysteine 38, cysteine 39, cysteine 104, and cysteine 134. Positions 208–251 (RKGLPPGSMTDVGWIPPEARERLKAGRGAGASGSGEREEGKEGA) are disordered. Basic and acidic residues predominate over residues 242 to 251 (GEREEGKEGA).

This sequence belongs to the complex I 20 kDa subunit family. In terms of assembly, NDH-1 is composed of 14 different subunits. Subunits NuoB, C, D, E, F, and G constitute the peripheral sector of the complex. Requires [4Fe-4S] cluster as cofactor.

It localises to the cell membrane. The enzyme catalyses a quinone + NADH + 5 H(+)(in) = a quinol + NAD(+) + 4 H(+)(out). Its function is as follows. NDH-1 shuttles electrons from NADH, via FMN and iron-sulfur (Fe-S) centers, to quinones in the respiratory chain. The immediate electron acceptor for the enzyme in this species is believed to be a menaquinone. Couples the redox reaction to proton translocation (for every two electrons transferred, four hydrogen ions are translocated across the cytoplasmic membrane), and thus conserves the redox energy in a proton gradient. The sequence is that of NADH-quinone oxidoreductase subunit B from Rubrobacter xylanophilus (strain DSM 9941 / JCM 11954 / NBRC 16129 / PRD-1).